A 183-amino-acid chain; its full sequence is ATP-dependent protease subunit HslV (183 aa).

The active site involves Thr-13. Na(+)-binding residues include Gly-168, Cys-171, and Thr-174.

It belongs to the peptidase T1B family. HslV subfamily. As to quaternary structure, a double ring-shaped homohexamer of HslV is capped on each side by a ring-shaped HslU homohexamer. The assembly of the HslU/HslV complex is dependent on binding of ATP.

The protein localises to the cytoplasm. It catalyses the reaction ATP-dependent cleavage of peptide bonds with broad specificity.. Its activity is regulated as follows. Allosterically activated by HslU binding. In terms of biological role, protease subunit of a proteasome-like degradation complex believed to be a general protein degrading machinery. In Xylella fastidiosa (strain M23), this protein is ATP-dependent protease subunit HslV.